The chain runs to 159 residues: 6,7-dimethyl-8-ribityllumazine synthase (159 aa).

5-amino-6-(D-ribitylamino)uracil-binding positions include tryptophan 27, 62–64 (SWE), and 86–88 (VLI). 91 to 92 (ST) is a binding site for (2S)-2-hydroxy-3-oxobutyl phosphate. The active-site Proton donor is histidine 94. Residue leucine 119 coordinates 5-amino-6-(D-ribitylamino)uracil. A (2S)-2-hydroxy-3-oxobutyl phosphate-binding site is contributed by arginine 133.

As to quaternary structure, homopentamer.

The enzyme catalyses (2S)-2-hydroxy-3-oxobutyl phosphate + 5-amino-6-(D-ribitylamino)uracil = 6,7-dimethyl-8-(1-D-ribityl)lumazine + phosphate + 2 H2O + H(+). It participates in cofactor biosynthesis; riboflavin biosynthesis; riboflavin from 2-hydroxy-3-oxobutyl phosphate and 5-amino-6-(D-ribitylamino)uracil: step 1/2. With respect to regulation, competitively inhibited by riboflavin (Ki of 17 uM). Functionally, catalyzes the formation of 6,7-dimethyl-8-ribityllumazine by condensation of 5-amino-6-(D-ribitylamino)uracil with 3,4-dihydroxy-2-butanone 4-phosphate. This is the penultimate step in the biosynthesis of riboflavin. Also binds riboflavin with an unexpected high affinity. This Schizosaccharomyces pombe (strain 972 / ATCC 24843) (Fission yeast) protein is 6,7-dimethyl-8-ribityllumazine synthase (rib4).